The following is a 201-amino-acid chain: uncharacterized protein (201 aa).

The protein belongs to the methyltransferase superfamily.

This is an uncharacterized protein from Bacillus subtilis (strain 168).